Reading from the N-terminus, the 212-residue chain is Large ribosomal subunit protein uL3 (212 aa).

Positions 135-161 are disordered; it reads MTHGNSLSHRAPGSIGQNQSPGKVFKG. An N5-methylglutamine modification is found at Gln153.

This sequence belongs to the universal ribosomal protein uL3 family. Part of the 50S ribosomal subunit. Forms a cluster with proteins L14 and L19. Post-translationally, methylated by PrmB.

One of the primary rRNA binding proteins, it binds directly near the 3'-end of the 23S rRNA, where it nucleates assembly of the 50S subunit. The polypeptide is Large ribosomal subunit protein uL3 (Alteromonas mediterranea (strain DSM 17117 / CIP 110805 / LMG 28347 / Deep ecotype)).